A 354-amino-acid polypeptide reads, in one-letter code: Ferrochelatase (354 aa).

His204 and Glu306 together coordinate Fe cation.

This sequence belongs to the ferrochelatase family.

It is found in the cytoplasm. It catalyses the reaction heme b + 2 H(+) = protoporphyrin IX + Fe(2+). Its pathway is porphyrin-containing compound metabolism; protoheme biosynthesis; protoheme from protoporphyrin-IX: step 1/1. Its function is as follows. Catalyzes the ferrous insertion into protoporphyrin IX. The polypeptide is Ferrochelatase (Coxiella burnetii (strain Dugway 5J108-111)).